The sequence spans 254 residues: 5'/3'-nucleotidase SurE (254 aa).

Positions 8, 9, 39, and 92 each coordinate a divalent metal cation.

The protein belongs to the SurE nucleotidase family. The cofactor is a divalent metal cation.

The protein localises to the cytoplasm. The enzyme catalyses a ribonucleoside 5'-phosphate + H2O = a ribonucleoside + phosphate. It catalyses the reaction a ribonucleoside 3'-phosphate + H2O = a ribonucleoside + phosphate. It carries out the reaction [phosphate](n) + H2O = [phosphate](n-1) + phosphate + H(+). Its function is as follows. Nucleotidase with a broad substrate specificity as it can dephosphorylate various ribo- and deoxyribonucleoside 5'-monophosphates and ribonucleoside 3'-monophosphates with highest affinity to 3'-AMP. Also hydrolyzes polyphosphate (exopolyphosphatase activity) with the preference for short-chain-length substrates (P20-25). Might be involved in the regulation of dNTP and NTP pools, and in the turnover of 3'-mononucleotides produced by numerous intracellular RNases (T1, T2, and F) during the degradation of various RNAs. The chain is 5'/3'-nucleotidase SurE from Edwardsiella ictaluri (strain 93-146).